A 437-amino-acid polypeptide reads, in one-letter code: GTPase Obg (437 aa).

An Obg domain is found at 2–160; that stretch reads SMFLDTAKIK…RNLELELKVL (159 aa). The OBG-type G domain maps to 161-338; sequence ADVGLVGFPS…LLEATAELLE (178 aa). GTP-binding positions include 167–174, 192–196, 214–217, 284–287, and 319–321; these read GFPSVGKS, FTTIV, DLPG, NKMD, and SGI. Mg(2+) contacts are provided by Ser174 and Thr194. The 79-residue stretch at 359–437 folds into the OCT domain; it reads GFNPDEPEFA…IGKFEFEFVD (79 aa).

Belongs to the TRAFAC class OBG-HflX-like GTPase superfamily. OBG GTPase family. Monomer. Requires Mg(2+) as cofactor.

The protein resides in the cytoplasm. In terms of biological role, an essential GTPase which binds GTP, GDP and possibly (p)ppGpp with moderate affinity, with high nucleotide exchange rates and a fairly low GTP hydrolysis rate. Plays a role in control of the cell cycle, stress response, ribosome biogenesis and in those bacteria that undergo differentiation, in morphogenesis control. This chain is GTPase Obg, found in Streptococcus suis (strain 05ZYH33).